Reading from the N-terminus, the 445-residue chain is Exodeoxyribonuclease 7 large subunit (445 aa).

The protein belongs to the XseA family. Heterooligomer composed of large and small subunits.

Its subcellular location is the cytoplasm. It catalyses the reaction Exonucleolytic cleavage in either 5'- to 3'- or 3'- to 5'-direction to yield nucleoside 5'-phosphates.. Bidirectionally degrades single-stranded DNA into large acid-insoluble oligonucleotides, which are then degraded further into small acid-soluble oligonucleotides. This chain is Exodeoxyribonuclease 7 large subunit, found in Xanthomonas oryzae pv. oryzae (strain PXO99A).